A 324-amino-acid polypeptide reads, in one-letter code: Beta-ketoacyl-[acyl-carrier-protein] synthase III (324 aa).

Catalysis depends on residues C114 and H246. Residues 247-251 are ACP-binding; that stretch reads QANLR. The active site involves N276.

This sequence belongs to the thiolase-like superfamily. FabH family. In terms of assembly, homodimer.

The protein resides in the cytoplasm. It carries out the reaction malonyl-[ACP] + acetyl-CoA + H(+) = 3-oxobutanoyl-[ACP] + CO2 + CoA. The protein operates within lipid metabolism; fatty acid biosynthesis. Functionally, catalyzes the condensation reaction of fatty acid synthesis by the addition to an acyl acceptor of two carbons from malonyl-ACP. Catalyzes the first condensation reaction which initiates fatty acid synthesis and may therefore play a role in governing the total rate of fatty acid production. Possesses both acetoacetyl-ACP synthase and acetyl transacylase activities. Its substrate specificity determines the biosynthesis of branched-chain and/or straight-chain of fatty acids. The chain is Beta-ketoacyl-[acyl-carrier-protein] synthase III from Campylobacter jejuni subsp. jejuni serotype O:6 (strain 81116 / NCTC 11828).